The chain runs to 279 residues: Eukaryotic translation initiation factor 3 subunit J (279 aa).

2 disordered regions span residues 1–74 and 229–279; these read MSWD…SQKS and ERQA…DDFM. A compositionally biased stretch (acidic residues) spans 20-39; that stretch reads WEDEDNDDPLLESWDIDEEE. Residues 34–74 are a coiled coil; the sequence is DIDEEEVARKKKEEEAKKKAEKEALKQKQQEAKNKKLSQKS. Over residues 40–67 the composition is skewed to basic and acidic residues; the sequence is VARKKKEEEAKKKAEKEALKQKQQEAKN. Over residues 268-279 the composition is skewed to acidic residues; that stretch reads DDFDDFDDDDFM.

This sequence belongs to the eIF-3 subunit J family. Component of the eukaryotic translation initiation factor 3 (eIF-3) complex.

It is found in the cytoplasm. Its function is as follows. Component of the eukaryotic translation initiation factor 3 (eIF-3) complex, which is involved in protein synthesis of a specialized repertoire of mRNAs and, together with other initiation factors, stimulates binding of mRNA and methionyl-tRNAi to the 40S ribosome. The eIF-3 complex specifically targets and initiates translation of a subset of mRNAs involved in cell proliferation. This is Eukaryotic translation initiation factor 3 subunit J from Meyerozyma guilliermondii (strain ATCC 6260 / CBS 566 / DSM 6381 / JCM 1539 / NBRC 10279 / NRRL Y-324) (Yeast).